We begin with the raw amino-acid sequence, 381 residues long: E3 ubiquitin-protein ligase RNF133 (381 aa).

Positions 65–167 (SSILKRVAGV…VKGMEILHLI (103 aa)) constitute a PA domain. Residues 186–208 (WLNHYFVSFMIVTTATLAYFTFY) traverse the membrane as a helical segment. The RING-type; atypical zinc-finger motif lies at 256–297 (CVICFEAYKPNEIVRILTCKHFFHKNCIDPWILAHGTCPMCK). The tract at residues 340–381 (LPPARTSSKVTHVQEHPTSVNVGSQPPEAEETGHPSFGQHDL) is disordered. Polar residues predominate over residues 344–363 (RTSSKVTHVQEHPTSVNVGS).

Interacts with E3 ligase UBE2J1. Post-translationally, auto-ubiquitinated.

It is found in the endoplasmic reticulum membrane. The enzyme catalyses S-ubiquitinyl-[E2 ubiquitin-conjugating enzyme]-L-cysteine + [acceptor protein]-L-lysine = [E2 ubiquitin-conjugating enzyme]-L-cysteine + N(6)-ubiquitinyl-[acceptor protein]-L-lysine.. It functions in the pathway protein modification; protein ubiquitination. Has E3 ubiquitin-protein ligase activity. Plays a role in male fecundity through the interaction with the E2 ubituitin-protein ligase UBE2J1. This chain is E3 ubiquitin-protein ligase RNF133 (Rnf133), found in Rattus norvegicus (Rat).